The sequence spans 136 residues: uncharacterized protein (136 aa).

The segment at 46–136 (SAGRHLGGPG…LDGLEDAEKR (91 aa)) is disordered. The segment covering 99-108 (GPGDAGGAGG) has biased composition (gly residues). Over residues 123–136 (IAELLDGLEDAEKR) the composition is skewed to acidic residues.

This is an uncharacterized protein from Homo sapiens (Human).